Here is a 36-residue protein sequence, read N- to C-terminus: Adenylate kinase (36 aa).

ATP is bound at residue 10 to 15 (GAGKGT). The NMP stretch occupies residues 30–36 (ATGDLFR). Threonine 31 and arginine 36 together coordinate AMP.

It belongs to the adenylate kinase family. In terms of assembly, monomer.

The protein resides in the cytoplasm. The catalysed reaction is AMP + ATP = 2 ADP. It participates in purine metabolism; AMP biosynthesis via salvage pathway; AMP from ADP: step 1/1. Its function is as follows. Catalyzes the reversible transfer of the terminal phosphate group between ATP and AMP. Plays an important role in cellular energy homeostasis and in adenine nucleotide metabolism. The protein is Adenylate kinase (adk) of Streptomyces griseus.